The chain runs to 199 residues: MRCDATQEKRAHSESGESVFFQKFLETRQILLSGEISKDLAEGIVRQLFVLESLSVSKPIYMYVDSPGGDVDAGYAIFDVIRFVKTPVYTIGMGLVASAGVLVLLAAKKDCRFGLRNSRYLIHQPLSGMRGVATDIEIHARELEKTRSKLNALIASETGVSLDKVAQDTNRDYWLDASQALEYGLISNLIEKRADLPKK.

Residue Ser-98 is the Nucleophile of the active site. His-123 is a catalytic residue.

The protein belongs to the peptidase S14 family. Fourteen ClpP subunits assemble into 2 heptameric rings which stack back to back to give a disk-like structure with a central cavity, resembling the structure of eukaryotic proteasomes.

The protein resides in the cytoplasm. The enzyme catalyses Hydrolysis of proteins to small peptides in the presence of ATP and magnesium. alpha-casein is the usual test substrate. In the absence of ATP, only oligopeptides shorter than five residues are hydrolyzed (such as succinyl-Leu-Tyr-|-NHMec, and Leu-Tyr-Leu-|-Tyr-Trp, in which cleavage of the -Tyr-|-Leu- and -Tyr-|-Trp bonds also occurs).. In terms of biological role, cleaves peptides in various proteins in a process that requires ATP hydrolysis. Has a chymotrypsin-like activity. Plays a major role in the degradation of misfolded proteins. The sequence is that of ATP-dependent Clp protease proteolytic subunit 2 from Treponema pallidum (strain Nichols).